The chain runs to 176 residues: Ribosome maturation factor RimM (176 aa).

Residues 101 to 173 (EGEYYHYRLI…RMVVDLPEGL (73 aa)) enclose the PRC barrel domain.

The protein belongs to the RimM family. Binds ribosomal protein uS19.

Its subcellular location is the cytoplasm. An accessory protein needed during the final step in the assembly of 30S ribosomal subunit, possibly for assembly of the head region. Essential for efficient processing of 16S rRNA. May be needed both before and after RbfA during the maturation of 16S rRNA. It has affinity for free ribosomal 30S subunits but not for 70S ribosomes. In Syntrophobacter fumaroxidans (strain DSM 10017 / MPOB), this protein is Ribosome maturation factor RimM.